We begin with the raw amino-acid sequence, 260 residues long: Histidine-binding periplasmic protein (260 aa).

Residues 1–22 (MKKLALSLSLVLAFSSATAAFA) form the signal peptide. Cys60 and Cys67 form a disulfide bridge. L-histidine contacts are provided by Ser91, Ser92, Ser94, Arg99, Thr143, and Asp183.

It belongs to the bacterial solute-binding protein 3 family. The complex is composed of two ATP-binding proteins (HisP), two transmembrane proteins (HisM and HisQ) and a solute-binding protein (HisJ).

The protein resides in the periplasm. Its function is as follows. Part of the ABC transporter complex HisPMQJ involved in histidine transport. Binds histidine. Interacts with HisQMP and stimulates ATPase activity of HisP, which results in histidine translocation. May have some additional function(s) in translocation that is independent of the stimulation of ATP hydrolysis. In Salmonella typhimurium (strain LT2 / SGSC1412 / ATCC 700720), this protein is Histidine-binding periplasmic protein.